The following is a 192-amino-acid chain: LexA repressor (192 aa).

The segment at residues 15-35 (RAEIARELGFRSANAAEEHLK) is a DNA-binding region (H-T-H motif). Active-site for autocatalytic cleavage activity residues include Ser-109 and Lys-146.

Belongs to the peptidase S24 family. As to quaternary structure, homodimer.

The catalysed reaction is Hydrolysis of Ala-|-Gly bond in repressor LexA.. Represses a number of genes involved in the response to DNA damage (SOS response), including recA and lexA. In the presence of single-stranded DNA, RecA interacts with LexA causing an autocatalytic cleavage which disrupts the DNA-binding part of LexA, leading to derepression of the SOS regulon and eventually DNA repair. The polypeptide is LexA repressor (Photobacterium profundum (strain SS9)).